We begin with the raw amino-acid sequence, 610 residues long: Glutamine--fructose-6-phosphate aminotransferase [isomerizing] (610 aa).

Cys2 serves as the catalytic Nucleophile; for GATase activity. Positions 2-218 (CGIVGAVAQR…EGDVAEITRR (217 aa)) constitute a Glutamine amidotransferase type-2 domain. 2 consecutive SIS domains span residues 286 to 426 (AAEI…QQGR) and 459 to 600 (LATD…VDQP). Lys605 acts as the For Fru-6P isomerization activity in catalysis.

As to quaternary structure, homodimer.

It localises to the cytoplasm. The enzyme catalyses D-fructose 6-phosphate + L-glutamine = D-glucosamine 6-phosphate + L-glutamate. Functionally, catalyzes the first step in hexosamine metabolism, converting fructose-6P into glucosamine-6P using glutamine as a nitrogen source. The chain is Glutamine--fructose-6-phosphate aminotransferase [isomerizing] from Vibrio vulnificus (strain CMCP6).